Consider the following 145-residue polypeptide: MDNKISTYSPAFSIVSWIALVGGIVTYLLGLWNAEMQLNEKGYYFAVLVLGLFSAASYQKTVRDKYEGIPTTSIYYMTCLTVFIISVALLMVGLWNATLLLSEKGFYGLAFFLSLFGAVAVQKNIRDAGINPPKETQVTQEEYSE.

Residues 1-12 lie on the Cytoplasmic side of the membrane; the sequence is MDNKISTYSPAF. The chain crosses the membrane as a helical span at residues 13 to 32; that stretch reads SIVSWIALVGGIVTYLLGLW. Residues 33–41 are Periplasmic-facing; the sequence is NAEMQLNEK. A helical membrane pass occupies residues 42–59; sequence GYYFAVLVLGLFSAASYQ. Over 60–71 the chain is Cytoplasmic; that stretch reads KTVRDKYEGIPT. Residues 72 to 94 form a helical membrane-spanning segment; that stretch reads TSIYYMTCLTVFIISVALLMVGL. The Periplasmic segment spans residues 95-98; that stretch reads WNAT. A helical membrane pass occupies residues 99–121; that stretch reads LLLSEKGFYGLAFFLSLFGAVAV. Over 122–145 the chain is Cytoplasmic; the sequence is QKNIRDAGINPPKETQVTQEEYSE.

It localises to the cell inner membrane. This Escherichia coli (strain K12) protein is Inner membrane protein YiaA (yiaA).